We begin with the raw amino-acid sequence, 207 residues long: Lipid A acyltransferase PagP (207 aa).

The N-terminal stretch at 1-24 (MKFDLTAACTLSATLLVSSGTVFA) is a signal peptide. Residues H79, D122, and S123 contribute to the active site.

The protein belongs to the lipid A palmitoyltransferase family. Homodimer.

The protein resides in the cell outer membrane. It carries out the reaction a lipid A + a 1,2-diacyl-sn-glycero-3-phosphocholine = a hepta-acyl lipid A + a 2-acyl-sn-glycero-3-phosphocholine. The enzyme catalyses a lipid IVA + a 1,2-diacyl-sn-glycero-3-phosphocholine = a lipid IVB + a 2-acyl-sn-glycero-3-phosphocholine. The catalysed reaction is a lipid IIA + a 1,2-diacyl-sn-glycero-3-phosphocholine = a lipid IIB + a 2-acyl-sn-glycero-3-phosphocholine. In terms of biological role, transfers a fatty acid residue from the sn-1 position of a phospholipid to the N-linked hydroxyfatty acid chain on the proximal unit of lipid A or its precursors. In Photorhabdus laumondii subsp. laumondii (strain DSM 15139 / CIP 105565 / TT01) (Photorhabdus luminescens subsp. laumondii), this protein is Lipid A acyltransferase PagP.